A 134-amino-acid polypeptide reads, in one-letter code: D-ribose pyranase (134 aa).

H20 serves as the catalytic Proton donor. Substrate contacts are provided by residues D28, H99, and 123 to 125 (FSN).

Belongs to the RbsD / FucU family. RbsD subfamily. In terms of assembly, homodecamer.

Its subcellular location is the cytoplasm. The catalysed reaction is beta-D-ribopyranose = beta-D-ribofuranose. The protein operates within carbohydrate metabolism; D-ribose degradation; D-ribose 5-phosphate from beta-D-ribopyranose: step 1/2. In terms of biological role, catalyzes the interconversion of beta-pyran and beta-furan forms of D-ribose. This Staphylococcus epidermidis (strain ATCC 12228 / FDA PCI 1200) protein is D-ribose pyranase.